Here is a 639-residue protein sequence, read N- to C-terminus: Putative oxidoreductase UacF (639 aa).

4Fe-4S ferredoxin-type domains lie at 3-32 (KFIAAEAAECIGCHACEIACAVAHNQENWP), 47-77 (KGQAANPVACHHCNNAPCVTACPVNALTFQS), 78-107 (DSVQLDEQKCIGCKRCAIACPFGVVEMVDT), 110-139 (QKCDLCNQRSSGTQACIEVCPTQALRLMDD), and 201-235 (QQATYESDRCVYCAEKANCNWHCPLHNAIPDYIRL). Residues cysteine 12, cysteine 15, cysteine 18, cysteine 22, cysteine 56, cysteine 59, cysteine 64, cysteine 68, cysteine 87, cysteine 90, cysteine 93, cysteine 97, cysteine 112, cysteine 115, cysteine 125, cysteine 129, cysteine 210, cysteine 213, cysteine 219, and cysteine 223 each contribute to the [4Fe-4S] cluster site.

The cofactor is [4Fe-4S] cluster.

Functionally, involved in formate-dependent uric acid degradation under microaerobic and anaerobic conditions. May reduce the enzymes necessary for uric acid degradation. This is Putative oxidoreductase UacF from Escherichia coli (strain K12).